The chain runs to 374 residues: N-acetyldiaminopimelate deacetylase (374 aa).

The active site involves Asp-69. Catalysis depends on Glu-128, which acts as the Proton acceptor.

It belongs to the peptidase M20A family. N-acetyldiaminopimelate deacetylase subfamily.

It catalyses the reaction N-acetyl-(2S,6S)-2,6-diaminopimelate + H2O = (2S,6S)-2,6-diaminopimelate + acetate. The protein operates within amino-acid biosynthesis; L-lysine biosynthesis via DAP pathway; LL-2,6-diaminopimelate from (S)-tetrahydrodipicolinate (acetylase route): step 3/3. Its function is as follows. Catalyzes the conversion of N-acetyl-diaminopimelate to diaminopimelate and acetate. The chain is N-acetyldiaminopimelate deacetylase from Bacillus licheniformis (strain ATCC 14580 / DSM 13 / JCM 2505 / CCUG 7422 / NBRC 12200 / NCIMB 9375 / NCTC 10341 / NRRL NRS-1264 / Gibson 46).